The following is a 224-amino-acid chain: Beta-casein (224 aa).

The signal sequence occupies residues 1–15 (MKVLILACLVALALA). A phosphoserine mark is found at S30, S32, S33, and S34. S50 carries the post-translational modification Phosphoserine; in variant A1, variant A2, variant A3, variant B, variant E, variant F, variant G and variant H.

The protein belongs to the beta-casein family. Mammary gland specific. Secreted in milk.

It localises to the secreted. Important role in determination of the surface properties of the casein micelles. In terms of biological role, casoparan acts as a macrophage activator, increasing the phagocytic activity of macrophages and peroxide release from macrophages. It also acts as a bradykinin-potentiating peptide. Functionally, casohypotensin acts as a bradykinin-potentiating peptide. Induces hypotension in rats. Acts as a strong competitive inhibitor of endo-oligopeptidase A. Its function is as follows. Antioxidant peptide has antioxidant activity. This chain is Beta-casein (CSN2), found in Bos taurus (Bovine).